The sequence spans 689 residues: DNA topoisomerase 1 (689 aa).

A Toprim domain is found at 3-113 (DNLVIVESPA…KENRVVFNEI (111 aa)). Residues glutamate 9 and aspartate 82 each coordinate Mg(2+). Residues 129 to 557 (EMDLVDAQQA…FYNSFKQDVE (429 aa)) form the Topo IA-type catalytic domain. An interaction with DNA region spans residues 163-168 (SAGRVQ). Catalysis depends on tyrosine 298, which acts as the O-(5'-phospho-DNA)-tyrosine intermediate. C4-type zinc fingers lie at residues 577-603 (CEVC…FPDC), 617-645 (CPKC…YPEC), and 658-681 (CPKC…CSNC).

It belongs to the type IA topoisomerase family. As to quaternary structure, monomer. Mg(2+) serves as cofactor.

The enzyme catalyses ATP-independent breakage of single-stranded DNA, followed by passage and rejoining.. Functionally, releases the supercoiling and torsional tension of DNA, which is introduced during the DNA replication and transcription, by transiently cleaving and rejoining one strand of the DNA duplex. Introduces a single-strand break via transesterification at a target site in duplex DNA. The scissile phosphodiester is attacked by the catalytic tyrosine of the enzyme, resulting in the formation of a DNA-(5'-phosphotyrosyl)-enzyme intermediate and the expulsion of a 3'-OH DNA strand. The free DNA strand then undergoes passage around the unbroken strand, thus removing DNA supercoils. Finally, in the religation step, the DNA 3'-OH attacks the covalent intermediate to expel the active-site tyrosine and restore the DNA phosphodiester backbone. The sequence is that of DNA topoisomerase 1 from Staphylococcus epidermidis (strain ATCC 35984 / DSM 28319 / BCRC 17069 / CCUG 31568 / BM 3577 / RP62A).